A 310-amino-acid chain; its full sequence is MLNSWPLAKDLQVLVEIVHSGSFSAAAATLGQTPAFVTKRIQILENTLATTLLNRSARGVALTESGQRCYEHALEILTQYQRLVDDVTQIKTRPEGMIRIGCSFGFGRSHIAPAITELMRNYPELQVHFELFDRQIDLVQDNIDLDIRINDAIPDYYIAHLLTKNKRILCAAPEYLQKYPQPQSLQELSRHDCLVTKERDMTHGIWELGNGQEKKSVKVSGHLSSNSGEIVLQWALEGKGIMLRSEWDVLPFLESGKLVRVLPEYAQSANIWAVYREPLYRSMKLRVCVEFLAAWCQQRLGKPDEGYQVM.

Residues 6 to 63 enclose the HTH lysR-type domain; that stretch reads PLAKDLQVLVEIVHSGSFSAAAATLGQTPAFVTKRIQILENTLATTLLNRSARGVALT. Residues 23 to 42 constitute a DNA-binding region (H-T-H motif); sequence FSAAAATLGQTPAFVTKRIQ.

This sequence belongs to the LysR transcriptional regulatory family.

Its function is as follows. Positive regulator required for L-tartrate-dependent anaerobic growth on glycerol. Induces expression of the ttdA-ttdB-ygjE operon. The chain is HTH-type transcriptional activator TtdR (ttdR) from Escherichia coli O6:H1 (strain CFT073 / ATCC 700928 / UPEC).